Reading from the N-terminus, the 460-residue chain is Chromosomal replication initiator protein DnaA 2 (460 aa).

Residues 1–68 (MRAWEDFLLL…KTSLVNNNGK (68 aa)) form a domain I, interacts with DnaA modulators region. The domain II stretch occupies residues 68 to 102 (KLIRVHITSLDKTAPFYKEKQIQQEKTAYFTMQYG). The domain III, AAA+ region stretch occupies residues 103 to 321 (NVNPEMTFGN…DALKLLSKRV (219 aa)). Residues Gly151, Gly153, Lys154, and Thr155 each contribute to the ATP site. The interval 322 to 460 (AYKKLAQQLL…EFFPEEEISC (139 aa)) is domain IV, binds dsDNA.

It belongs to the DnaA family. Oligomerizes as a right-handed, spiral filament on DNA at oriC.

It localises to the cytoplasm. In terms of biological role, plays an essential role in the initiation and regulation of chromosomal replication. ATP-DnaA binds to the origin of replication (oriC) to initiate formation of the DNA replication initiation complex once per cell cycle. Binds the DnaA box (a 9 base pair repeat at the origin) and separates the double-stranded (ds)DNA. Forms a right-handed helical filament on oriC DNA; dsDNA binds to the exterior of the filament while single-stranded (ss)DNA is stabiized in the filament's interior. The ATP-DnaA-oriC complex binds and stabilizes one strand of the AT-rich DNA unwinding element (DUE), permitting loading of DNA polymerase. After initiation quickly degrades to an ADP-DnaA complex that is not apt for DNA replication. Binds acidic phospholipids. This Chlamydia caviae (strain ATCC VR-813 / DSM 19441 / 03DC25 / GPIC) (Chlamydophila caviae) protein is Chromosomal replication initiator protein DnaA 2.